Reading from the N-terminus, the 432-residue chain is Adenylosuccinate synthetase (432 aa).

GTP contacts are provided by residues 13–19 and 41–43; these read GDEGKGK and GHT. D14 functions as the Proton acceptor in the catalytic mechanism. Mg(2+) contacts are provided by D14 and G41. IMP-binding positions include 14-17, 39-42, T130, R144, Q225, T240, and R304; these read DEGK and NAGH. Residue H42 is the Proton donor of the active site. Substrate is bound at residue 300-306; the sequence is ATTGRRR. Residues R306, 332-334, and 415-417 contribute to the GTP site; these read KLD and STG.

This sequence belongs to the adenylosuccinate synthetase family. As to quaternary structure, homodimer. Mg(2+) serves as cofactor.

The protein resides in the cytoplasm. It carries out the reaction IMP + L-aspartate + GTP = N(6)-(1,2-dicarboxyethyl)-AMP + GDP + phosphate + 2 H(+). The protein operates within purine metabolism; AMP biosynthesis via de novo pathway; AMP from IMP: step 1/2. Functionally, plays an important role in the de novo pathway of purine nucleotide biosynthesis. Catalyzes the first committed step in the biosynthesis of AMP from IMP. The protein is Adenylosuccinate synthetase of Salmonella heidelberg (strain SL476).